A 745-amino-acid chain; its full sequence is Elongation factor G, mitochondrial (745 aa).

In terms of domain architecture, tr-type G spans 40–317; the sequence is ERIRNIGISA…AVLDYLPNPG (278 aa). Residues 49–56, 116–120, and 170–173 contribute to the GTP site; these read AHIDSGKT, DTPGH, and NKLD.

It belongs to the TRAFAC class translation factor GTPase superfamily. Classic translation factor GTPase family. EF-G/EF-2 subfamily.

Its subcellular location is the mitochondrion. The protein operates within protein biosynthesis; polypeptide chain elongation. In terms of biological role, mitochondrial GTPase that catalyzes the GTP-dependent ribosomal translocation step during translation elongation. During this step, the ribosome changes from the pre-translocational (PRE) to the post-translocational (POST) state as the newly formed A-site-bound peptidyl-tRNA and P-site-bound deacylated tRNA move to the P and E sites, respectively. Catalyzes the coordinated movement of the two tRNA molecules, the mRNA and conformational changes in the ribosome. Essential during development as it acts as a retrograde signal from mitochondria to the nucleus to slow down cell proliferation if mitochondrial energy output is low. The sequence is that of Elongation factor G, mitochondrial from Drosophila erecta (Fruit fly).